A 464-amino-acid chain; its full sequence is Arabinose-proton symporter (464 aa).

Helical transmembrane passes span 21–43 (GFVI…DTAV), 63–85 (GLVI…FLSD), 92–111 (ILMT…ALSQ), 116–138 (LIIA…VTYI), 150–172 (LSSL…NLAV), 185–207 (GWRW…LLVV), 266–288 (ALVI…ITYY), 303–325 (GFVT…VLLI), 332–354 (KLMS…SFYF), 364–386 (VLIL…IMIS), 398–420 (AGIA…PMMI), and 424–446 (GLAY…VVTI).

The protein belongs to the major facilitator superfamily. Sugar transporter (TC 2.A.1.1) family.

It is found in the cell membrane. The enzyme catalyses L-arabinose(in) + H(+)(in) = L-arabinose(out) + H(+)(out). The catalysed reaction is D-galactose(in) + H(+)(in) = D-galactose(out) + H(+)(out). It carries out the reaction D-xylose(in) + H(+)(in) = D-xylose(out) + H(+)(out). Uptake of L-arabinose across the cytoplasmic membrane with the concomitant transport of protons into the cell (symport system). In the presence of inducing amounts of L-arabinose, can import both D-galactose and D-xylose. Can also transport the disaccharide alpha-1,5-arabinobiose. The protein is Arabinose-proton symporter (araE) of Bacillus subtilis (strain 168).